The following is a 279-amino-acid chain: Acyl-[acyl-carrier-protein]--UDP-N-acetylglucosamine O-acyltransferase (279 aa).

This sequence belongs to the transferase hexapeptide repeat family. LpxA subfamily. In terms of assembly, homotrimer.

It is found in the cytoplasm. It carries out the reaction a (3R)-hydroxyacyl-[ACP] + UDP-N-acetyl-alpha-D-glucosamine = a UDP-3-O-[(3R)-3-hydroxyacyl]-N-acetyl-alpha-D-glucosamine + holo-[ACP]. Its pathway is glycolipid biosynthesis; lipid IV(A) biosynthesis; lipid IV(A) from (3R)-3-hydroxytetradecanoyl-[acyl-carrier-protein] and UDP-N-acetyl-alpha-D-glucosamine: step 1/6. In terms of biological role, involved in the biosynthesis of lipid A, a phosphorylated glycolipid that anchors the lipopolysaccharide to the outer membrane of the cell. This is Acyl-[acyl-carrier-protein]--UDP-N-acetylglucosamine O-acyltransferase from Chlamydia pneumoniae (Chlamydophila pneumoniae).